The following is a 124-amino-acid chain: Ragulator complex protein LAMTOR3 (124 aa).

Residues 57–70 (TDQGSKLGLSKNKS) form a required for interaction with LAMTOR2 region.

The protein belongs to the LAMTOR3 family. As to quaternary structure, part of the Ragulator complex composed of LAMTOR1, LAMTOR2, LAMTOR3, LAMTOR4 and LAMTOR5. LAMTOR4 and LAMTOR5 form a heterodimer that interacts, through LAMTOR1, with a LAMTOR2, LAMTOR3 heterodimer. The Ragulator complex interacts with both the mTORC1 complex and heterodimers constituted of the Rag GTPases RagA/RRAGA, RagB/RRAGB, RagC/RRAGC and RagD/RRAGD; regulated by amino acid availability. The Ragulator complex interacts with SLC38A9; the probable amino acid sensor. Interacts with LAMTOR1 and LAMTOR2; the interaction is direct. Component of the lysosomal folliculin complex (LFC), composed of FLCN, FNIP1 (or FNIP2), RagA/RRAGA or RagB/RRAGB GDP-bound, RagC/RRAGC or RagD/RRAGD GTP-bound, and Ragulator. Interacts with MAP2K1/MEK1 and MAPK2. Interacts with MORG1.

Its subcellular location is the late endosome membrane. In terms of biological role, as part of the Ragulator complex it is involved in amino acid sensing and activation of mTORC1, a signaling complex promoting cell growth in response to growth factors, energy levels, and amino acids. Activated by amino acids through a mechanism involving the lysosomal V-ATPase, the Ragulator plays a dual role for the small GTPases Rag (RagA/RRAGA, RagB/RRAGB, RagC/RRAGC and/or RagD/RRAGD): it (1) acts as a guanine nucleotide exchange factor (GEF), activating the small GTPases Rag and (2) mediates recruitment of Rag GTPases to the lysosome membrane. Activated Ragulator and Rag GTPases function as a scaffold recruiting mTORC1 to lysosomes where it is in turn activated. Adapter protein that enhances the efficiency of the MAP kinase cascade facilitating the activation of MAPK2. The chain is Ragulator complex protein LAMTOR3 (Lamtor3) from Mus musculus (Mouse).